The sequence spans 180 residues: ATP synthase subunit delta (180 aa).

The protein belongs to the ATPase delta chain family. In terms of assembly, F-type ATPases have 2 components, F(1) - the catalytic core - and F(0) - the membrane proton channel. F(1) has five subunits: alpha(3), beta(3), gamma(1), delta(1), epsilon(1). CF(0) has four main subunits: a(1), b(1), b'(1) and c(10-14). The alpha and beta chains form an alternating ring which encloses part of the gamma chain. F(1) is attached to F(0) by a central stalk formed by the gamma and epsilon chains, while a peripheral stalk is formed by the delta, b and b' chains.

It localises to the cellular thylakoid membrane. Functionally, f(1)F(0) ATP synthase produces ATP from ADP in the presence of a proton or sodium gradient. F-type ATPases consist of two structural domains, F(1) containing the extramembraneous catalytic core and F(0) containing the membrane proton channel, linked together by a central stalk and a peripheral stalk. During catalysis, ATP synthesis in the catalytic domain of F(1) is coupled via a rotary mechanism of the central stalk subunits to proton translocation. In terms of biological role, this protein is part of the stalk that links CF(0) to CF(1). It either transmits conformational changes from CF(0) to CF(1) or is implicated in proton conduction. In Synechococcus elongatus (strain ATCC 33912 / PCC 7942 / FACHB-805) (Anacystis nidulans R2), this protein is ATP synthase subunit delta.